Reading from the N-terminus, the 135-residue chain is Small ribosomal subunit protein bS16 (135 aa).

The disordered stretch occupies residues 106–135 (TERRQKRLVVKSRRRQAKKEAEGKAAGAEA). A compositionally biased stretch (basic residues) spans 109–122 (RQKRLVVKSRRRQA).

It belongs to the bacterial ribosomal protein bS16 family.

This is Small ribosomal subunit protein bS16 from Chlorobium phaeobacteroides (strain DSM 266 / SMG 266 / 2430).